The following is a 242-amino-acid chain: uncharacterized protein (242 aa).

This is an uncharacterized protein from Bacillus subtilis (strain 168).